A 519-amino-acid chain; its full sequence is DNA-directed RNA polymerase subunit Rpo2N (519 aa).

It belongs to the RNA polymerase beta chain family. In terms of assembly, part of the RNA polymerase complex.

It is found in the cytoplasm. It catalyses the reaction RNA(n) + a ribonucleoside 5'-triphosphate = RNA(n+1) + diphosphate. DNA-dependent RNA polymerase (RNAP) catalyzes the transcription of DNA into RNA using the four ribonucleoside triphosphates as substrates. The Rpo2 subunit (Rpo2N and Rpo2C in this organism) is implicated in DNA promoter recognition and in nucleotide binding. The protein is DNA-directed RNA polymerase subunit Rpo2N of Methanothermobacter thermautotrophicus (strain ATCC 29096 / DSM 1053 / JCM 10044 / NBRC 100330 / Delta H) (Methanobacterium thermoautotrophicum).